A 610-amino-acid chain; its full sequence is UvrABC system protein C (610 aa).

One can recognise a GIY-YIG domain in the interval 16–94 (SQPGVYRMYD…IKLYQPRYNV (79 aa)). Residues 204 to 239 (DQVLTQLIARMEKASQDLAFEEAARIRDQIQAVRRV) enclose the UVR domain.

This sequence belongs to the UvrC family. As to quaternary structure, interacts with UvrB in an incision complex.

The protein resides in the cytoplasm. Its function is as follows. The UvrABC repair system catalyzes the recognition and processing of DNA lesions. UvrC both incises the 5' and 3' sides of the lesion. The N-terminal half is responsible for the 3' incision and the C-terminal half is responsible for the 5' incision. This Salmonella dublin (strain CT_02021853) protein is UvrABC system protein C.